We begin with the raw amino-acid sequence, 402 residues long: Putative cystathionine beta-lyase (402 aa).

Lys236 is subject to N6-(pyridoxal phosphate)lysine.

It belongs to the class-II pyridoxal-phosphate-dependent aminotransferase family. MalY/PatB cystathionine beta-lyase subfamily. Pyridoxal 5'-phosphate serves as cofactor.

It carries out the reaction L,L-cystathionine + H2O = L-homocysteine + pyruvate + NH4(+). It catalyses the reaction an S-substituted L-cysteine + H2O = a thiol + pyruvate + NH4(+). It functions in the pathway amino-acid biosynthesis; L-methionine biosynthesis via de novo pathway; L-homocysteine from L-cystathionine: step 1/1. The protein is Putative cystathionine beta-lyase of Mycobacterium leprae (strain TN).